The sequence spans 171 residues: UPF0763 protein Hac_0849 (171 aa).

The protein belongs to the UPF0763 family.

The sequence is that of UPF0763 protein Hac_0849 from Helicobacter acinonychis (strain Sheeba).